Reading from the N-terminus, the 679-residue chain is tRNA uridine 5-carboxymethylaminomethyl modification enzyme MnmG (679 aa).

Position 15–20 (15–20) interacts with FAD; the sequence is GAGHAG. Residue 314 to 328 participates in NAD(+) binding; sequence GPRYCPSIEDKIVRF.

This sequence belongs to the MnmG family. Homodimer. Heterotetramer of two MnmE and two MnmG subunits. The cofactor is FAD.

The protein resides in the cytoplasm. Its function is as follows. NAD-binding protein involved in the addition of a carboxymethylaminomethyl (cmnm) group at the wobble position (U34) of certain tRNAs, forming tRNA-cmnm(5)s(2)U34. The protein is tRNA uridine 5-carboxymethylaminomethyl modification enzyme MnmG of Roseiflexus sp. (strain RS-1).